A 308-amino-acid chain; its full sequence is Aspartate carbamoyltransferase catalytic subunit (308 aa).

Arginine 55 and threonine 56 together coordinate carbamoyl phosphate. Lysine 84 serves as a coordination point for L-aspartate. The carbamoyl phosphate site is built by arginine 105, histidine 133, and glutamine 136. The L-aspartate site is built by arginine 167 and arginine 228. 2 residues coordinate carbamoyl phosphate: leucine 267 and proline 268.

The protein belongs to the aspartate/ornithine carbamoyltransferase superfamily. ATCase family. In terms of assembly, heterooligomer of catalytic and regulatory chains.

It catalyses the reaction carbamoyl phosphate + L-aspartate = N-carbamoyl-L-aspartate + phosphate + H(+). It participates in pyrimidine metabolism; UMP biosynthesis via de novo pathway; (S)-dihydroorotate from bicarbonate: step 2/3. Catalyzes the condensation of carbamoyl phosphate and aspartate to form carbamoyl aspartate and inorganic phosphate, the committed step in the de novo pyrimidine nucleotide biosynthesis pathway. The protein is Aspartate carbamoyltransferase catalytic subunit of Methanocella arvoryzae (strain DSM 22066 / NBRC 105507 / MRE50).